The chain runs to 146 residues: Hut operon positive regulatory protein (146 aa).

Belongs to the HutP family. Homohexamer.

Its function is as follows. Antiterminator that binds to cis-acting regulatory sequences on the mRNA in the presence of histidine, thereby suppressing transcription termination and activating the hut operon for histidine utilization. The sequence is that of Hut operon positive regulatory protein from Bacillus anthracis (strain CDC 684 / NRRL 3495).